The chain runs to 25 residues: Dermaseptin-DI5 (25 aa).

Belongs to the frog skin active peptide (FSAP) family. Dermaseptin subfamily. In terms of tissue distribution, expressed by the skin glands.

It is found in the secreted. Antibacterial peptide with activity against Gram-positive bacteria S.aureus and E.faecalis, and Gram-negative bacteria P.aeruginosa and E.coli. The polypeptide is Dermaseptin-DI5 (Phyllomedusa distincta (Monkey frog)).